Reading from the N-terminus, the 235-residue chain is Ubiquinone biosynthesis O-methyltransferase (235 aa).

Positions 40, 60, 81, and 125 each coordinate S-adenosyl-L-methionine.

The protein belongs to the methyltransferase superfamily. UbiG/COQ3 family.

It carries out the reaction a 3-demethylubiquinol + S-adenosyl-L-methionine = a ubiquinol + S-adenosyl-L-homocysteine + H(+). The catalysed reaction is a 3-(all-trans-polyprenyl)benzene-1,2-diol + S-adenosyl-L-methionine = a 2-methoxy-6-(all-trans-polyprenyl)phenol + S-adenosyl-L-homocysteine + H(+). It participates in cofactor biosynthesis; ubiquinone biosynthesis. O-methyltransferase that catalyzes the 2 O-methylation steps in the ubiquinone biosynthetic pathway. The sequence is that of Ubiquinone biosynthesis O-methyltransferase from Nitrosomonas europaea (strain ATCC 19718 / CIP 103999 / KCTC 2705 / NBRC 14298).